Here is a 444-residue protein sequence, read N- to C-terminus: DNA repair protein RadA (444 aa).

The C4-type zinc finger occupies 8–25 (CSNCGNISPKWSGQCFDC). Residue 89-96 (GDPGIGKS) participates in ATP binding. Positions 248-252 (KNRFG) match the RadA KNRFG motif motif. The tract at residues 347–444 (EVYLSIAGGL…HLKDLKEIIK (98 aa)) is lon-protease-like.

It belongs to the RecA family. RadA subfamily.

DNA-dependent ATPase involved in processing of recombination intermediates, plays a role in repairing DNA breaks. Stimulates the branch migration of RecA-mediated strand transfer reactions, allowing the 3' invading strand to extend heteroduplex DNA faster. Binds ssDNA in the presence of ADP but not other nucleotides, has ATPase activity that is stimulated by ssDNA and various branched DNA structures, but inhibited by SSB. Does not have RecA's homology-searching function. This chain is DNA repair protein RadA, found in Rickettsia conorii (strain ATCC VR-613 / Malish 7).